The following is a 135-amino-acid chain: Transcription antitermination protein NusB (135 aa).

The protein belongs to the NusB family.

Its function is as follows. Involved in transcription antitermination. Required for transcription of ribosomal RNA (rRNA) genes. Binds specifically to the boxA antiterminator sequence of the ribosomal RNA (rrn) operons. The sequence is that of Transcription antitermination protein NusB from Clostridium perfringens (strain ATCC 13124 / DSM 756 / JCM 1290 / NCIMB 6125 / NCTC 8237 / Type A).